Reading from the N-terminus, the 375-residue chain is Alcohol dehydrogenase 1 (375 aa).

Ser-2 carries the N-acetylserine modification. Residues Cys-47, His-68, Cys-98, Cys-101, Cys-104, Cys-112, and Cys-175 each coordinate Zn(2+). Residues 200 to 205, Asp-224, and Lys-229 each bind NAD(+); that span reads GLGGVG. N6-succinyllysine is present on Lys-234. Position 293–295 (293–295) interacts with NAD(+); sequence VGV. Position 340 is an N6-succinyllysine (Lys-340). Arg-370 is a binding site for NAD(+).

Belongs to the zinc-containing alcohol dehydrogenase family. Class-I subfamily. The cofactor is Zn(2+).

It is found in the cytoplasm. It catalyses the reaction a primary alcohol + NAD(+) = an aldehyde + NADH + H(+). The catalysed reaction is a secondary alcohol + NAD(+) = a ketone + NADH + H(+). The sequence is that of Alcohol dehydrogenase 1 (ADH1) from Peromyscus maniculatus (North American deer mouse).